Consider the following 247-residue polypeptide: NAD(P)H-quinone oxidoreductase subunit K, chloroplastic (247 aa).

Positions 61, 62, 126, and 157 each coordinate [4Fe-4S] cluster.

It belongs to the complex I 20 kDa subunit family. In terms of assembly, NDH is composed of at least 16 different subunits, 5 of which are encoded in the nucleus. [4Fe-4S] cluster is required as a cofactor.

Its subcellular location is the plastid. The protein resides in the chloroplast thylakoid membrane. The catalysed reaction is a plastoquinone + NADH + (n+1) H(+)(in) = a plastoquinol + NAD(+) + n H(+)(out). It carries out the reaction a plastoquinone + NADPH + (n+1) H(+)(in) = a plastoquinol + NADP(+) + n H(+)(out). Its function is as follows. NDH shuttles electrons from NAD(P)H:plastoquinone, via FMN and iron-sulfur (Fe-S) centers, to quinones in the photosynthetic chain and possibly in a chloroplast respiratory chain. The immediate electron acceptor for the enzyme in this species is believed to be plastoquinone. Couples the redox reaction to proton translocation, and thus conserves the redox energy in a proton gradient. The protein is NAD(P)H-quinone oxidoreductase subunit K, chloroplastic of Anthoceros angustus (Hornwort).